The following is a 397-amino-acid chain: Putative serine/threonine-protein kinase R301 (397 aa).

The Protein kinase domain occupies 25–397 (QIKSTSVGSG…IIRHFNSPRL (373 aa)). ATP contacts are provided by residues 31-39 (VGSGGSDNI) and K53. D218 functions as the Proton acceptor in the catalytic mechanism.

The protein belongs to the protein kinase superfamily. Ser/Thr protein kinase family.

The protein resides in the virion. The catalysed reaction is L-seryl-[protein] + ATP = O-phospho-L-seryl-[protein] + ADP + H(+). The enzyme catalyses L-threonyl-[protein] + ATP = O-phospho-L-threonyl-[protein] + ADP + H(+). This is Putative serine/threonine-protein kinase R301 from Acanthamoeba polyphaga (Amoeba).